A 356-amino-acid chain; its full sequence is Heat-inducible transcription repressor HrcA (356 aa).

This sequence belongs to the HrcA family.

Negative regulator of class I heat shock genes (grpE-dnaK-dnaJ and groELS operons). Prevents heat-shock induction of these operons. This chain is Heat-inducible transcription repressor HrcA, found in Chelativorans sp. (strain BNC1).